Reading from the N-terminus, the 533-residue chain is GMP synthase [glutamine-hydrolyzing] (533 aa).

In terms of domain architecture, Glutamine amidotransferase type-1 spans 12–206 (TILVLDFGSQ…AVGICGAEQK (195 aa)). Cys-88 (nucleophile) is an active-site residue. Residues His-180 and Glu-182 contribute to the active site. Residues 207–408 (WTMAEFIGQE…LGISPELVGR (202 aa)) enclose the GMPS ATP-PPase domain. Position 235-241 (235-241 (SGGVDST)) interacts with ATP. XMP contacts are provided by Arg-308, Asp-470, Lys-525, and Glu-531.

In terms of assembly, homodimer. Requires Mg(2+) as cofactor.

Its subcellular location is the cytoplasm. The protein localises to the cytosol. It carries out the reaction XMP + L-glutamine + ATP + H2O = GMP + L-glutamate + AMP + diphosphate + 2 H(+). The protein operates within purine metabolism; GMP biosynthesis; GMP from XMP (L-Gln route): step 1/1. Catalyzes the conversion of xanthine monophosphate (XMP) to GMP in the presence of glutamine and ATP through an adenyl-XMP intermediate. The protein is GMP synthase [glutamine-hydrolyzing] (gua1) of Emericella nidulans (strain FGSC A4 / ATCC 38163 / CBS 112.46 / NRRL 194 / M139) (Aspergillus nidulans).